The following is a 321-amino-acid chain: Homoserine kinase (321 aa).

It belongs to the pseudomonas-type ThrB family.

It catalyses the reaction L-homoserine + ATP = O-phospho-L-homoserine + ADP + H(+). It participates in amino-acid biosynthesis; L-threonine biosynthesis; L-threonine from L-aspartate: step 4/5. The protein is Homoserine kinase of Xanthobacter autotrophicus (strain ATCC BAA-1158 / Py2).